Consider the following 146-residue polypeptide: L-fucose mutarotase (146 aa).

The active-site Proton donor is the H22. Substrate is bound by residues D30, R109, and 131-133 (YGN).

The protein belongs to the RbsD / FucU family. FucU mutarotase subfamily. Homodecamer.

The protein resides in the cytoplasm. It carries out the reaction alpha-L-fucose = beta-L-fucose. The protein operates within carbohydrate metabolism; L-fucose metabolism. Its function is as follows. Involved in the anomeric conversion of L-fucose. The polypeptide is L-fucose mutarotase (Glaesserella parasuis serovar 5 (strain SH0165) (Haemophilus parasuis)).